The sequence spans 161 residues: Arginine repressor (161 aa).

This sequence belongs to the ArgR family.

The protein resides in the cytoplasm. It participates in amino-acid biosynthesis; L-arginine biosynthesis [regulation]. In terms of biological role, regulates arginine biosynthesis genes. The polypeptide is Arginine repressor (Corynebacterium aurimucosum (strain ATCC 700975 / DSM 44827 / CIP 107346 / CN-1) (Corynebacterium nigricans)).